Reading from the N-terminus, the 159-residue chain is Small ribosomal subunit protein uS7c (159 aa).

This sequence belongs to the universal ribosomal protein uS7 family. As to quaternary structure, part of the 30S ribosomal subunit.

Its subcellular location is the plastid. It localises to the chloroplast. Its function is as follows. One of the primary rRNA binding proteins, it binds directly to 16S rRNA where it nucleates assembly of the head domain of the 30S subunit. In Bigelowiella natans (Pedinomonas minutissima), this protein is Small ribosomal subunit protein uS7c (rps7).